The sequence spans 424 residues: Probable ribonuclease FAU-1 (424 aa).

This sequence belongs to the FAU-1 family.

Functionally, probable RNase involved in rRNA stability through maturation and/or degradation of precursor rRNAs. Binds to RNA in loop regions with AU-rich sequences. The chain is Probable ribonuclease FAU-1 from Saccharolobus islandicus (strain M.16.27) (Sulfolobus islandicus).